We begin with the raw amino-acid sequence, 401 residues long: SVP1-like protein 2 (401 aa).

2 WD repeats span residues 222–262 (AHKN…LIHE) and 267–306 (LDRA…DKRH).

The protein belongs to the WD repeat PROPPIN family.

The protein localises to the vacuole membrane. It is found in the cytoplasmic vesicle membrane. Involved in mitochondrial or peroxisomal functions and amino acid signaling pathways. In Eremothecium gossypii (strain ATCC 10895 / CBS 109.51 / FGSC 9923 / NRRL Y-1056) (Yeast), this protein is SVP1-like protein 2 (HSV2).